The following is a 288-amino-acid chain: uncharacterized protein (288 aa).

4 helical membrane passes run 43–63 (LFTL…NYII), 190–210 (LFIF…FLLE), 243–263 (GIPI…SILI), and 265–285 (LLQM…NKSL).

The protein localises to the cell membrane. This is an uncharacterized protein from Rickettsia prowazekii (strain Madrid E).